Here is a 338-residue protein sequence, read N- to C-terminus: Sesquiterpene synthase 2 (338 aa).

Mg(2+)-binding residues include Asp-93, Asn-228, Ser-232, and Glu-236. Positions Asp-93 to Asp-97 match the DDXXD motif motif. Positions Asn-228–Glu-236 match the NSE/DTE motif motif. (2E,6E)-farnesyl diphosphate contacts are provided by Arg-316 and Tyr-317.

It belongs to the terpene synthase family. Mg(2+) is required as a cofactor.

It catalyses the reaction (2E,6E)-farnesyl diphosphate = alpha-copaene + diphosphate. The enzyme catalyses (2E,6E)-farnesyl diphosphate = beta-copaene + diphosphate. The catalysed reaction is (2E,6E)-farnesyl diphosphate = alpha-muurolene + diphosphate. It carries out the reaction (2E,6E)-farnesyl diphosphate = gamma-muurolene + diphosphate. It catalyses the reaction (2E,6E)-farnesyl diphosphate = delta-cadinene + diphosphate. Its function is as follows. Terpene cyclase that catalyzes the cyclization of farnesyl diphosphate (FPP) to various sesquiterpenes, including alpha-copaene, beta-copaene, beta-elemene, alpha-muurolene, gamma-muurolene and delta-cadinene. This is Sesquiterpene synthase 2 from Postia placenta (strain ATCC 44394 / Madison 698-R) (Brown rot fungus).